Here is a 164-residue protein sequence, read N- to C-terminus: 3-isopropylmalate dehydratase small subunit (164 aa).

The protein belongs to the LeuD family. LeuD type 2 subfamily. In terms of assembly, heterodimer of LeuC and LeuD.

The enzyme catalyses (2R,3S)-3-isopropylmalate = (2S)-2-isopropylmalate. Its pathway is amino-acid biosynthesis; L-leucine biosynthesis; L-leucine from 3-methyl-2-oxobutanoate: step 2/4. Functionally, catalyzes the isomerization between 2-isopropylmalate and 3-isopropylmalate, via the formation of 2-isopropylmaleate. The polypeptide is 3-isopropylmalate dehydratase small subunit (Lachnospira eligens (strain ATCC 27750 / DSM 3376 / VPI C15-48 / C15-B4) (Eubacterium eligens)).